We begin with the raw amino-acid sequence, 119 residues long: Membrane-anchored ubiquitin-fold protein 3 (119 aa).

The 69-residue stretch at 8–76 (IEVKFRLFDG…NNRTLAESRV (69 aa)) folds into the Ubiquitin-like domain. Cys116 carries the cysteine methyl ester modification. Cys116 is lipidated: S-geranylgeranyl cysteine. The propeptide at 117-119 (TIL) is removed in mature form.

It is found in the cell membrane. In terms of biological role, may serve as docking site to facilitate the association of other proteins to the plasma membrane. The polypeptide is Membrane-anchored ubiquitin-fold protein 3 (MUB3) (Oryza sativa subsp. japonica (Rice)).